The following is an 856-amino-acid chain: Protein translocase subunit SecA (856 aa).

Residues Gln-77, 95–99 (GEGKT), and Asp-534 contribute to the ATP site.

It belongs to the SecA family. As to quaternary structure, monomer and homodimer. Part of the essential Sec protein translocation apparatus which comprises SecA, SecYEG and auxiliary proteins SecDF. Other proteins may also be involved.

It localises to the cell inner membrane. The protein localises to the cytoplasm. It carries out the reaction ATP + H2O + cellular proteinSide 1 = ADP + phosphate + cellular proteinSide 2.. Functionally, part of the Sec protein translocase complex. Interacts with the SecYEG preprotein conducting channel. Has a central role in coupling the hydrolysis of ATP to the transfer of proteins into and across the cell membrane, serving as an ATP-driven molecular motor driving the stepwise translocation of polypeptide chains across the membrane. This Thermosipho africanus (strain TCF52B) protein is Protein translocase subunit SecA.